We begin with the raw amino-acid sequence, 203 residues long: Small ribosomal subunit protein uS4c (203 aa).

A disordered region spans residues 15-42; it reads LGALPGLTSKRPRAGSDPRNQELSGNKS. The S4 RNA-binding domain occupies 89–150; the sequence is MRLDNILFRL…DQKSKAMIQN (62 aa).

This sequence belongs to the universal ribosomal protein uS4 family. Part of the 30S ribosomal subunit. Contacts protein S5. The interaction surface between S4 and S5 is involved in control of translational fidelity.

The protein resides in the plastid. The protein localises to the chloroplast. In terms of biological role, one of the primary rRNA binding proteins, it binds directly to 16S rRNA where it nucleates assembly of the body of the 30S subunit. Functionally, with S5 and S12 plays an important role in translational accuracy. The polypeptide is Small ribosomal subunit protein uS4c (rps4) (Oenothera elata subsp. hookeri (Hooker's evening primrose)).